Consider the following 59-residue polypeptide: Potassium channel toxin alpha-KTx 4.1 (59 aa).

Residues 1–22 form the signal peptide; sequence MKAFYGILIIFILISMIDLSKQ. 3 cysteine pairs are disulfide-bonded: C29–C50, C35–C55, and C39–C57. The segment at 48 to 55 is interaction with Ca(2+)-activated K(+) channels; that stretch reads GKCMNGKC.

Belongs to the short scorpion toxin superfamily. Potassium channel inhibitor family. Alpha-KTx 04 subfamily. Expressed by the venom gland.

It is found in the secreted. In terms of biological role, potently blocks Kv1.1/KCNA1 (85%), Kv1.2/KCNA2 (91%), Kv1.3/KCNA3 (89%), Kv1.6/KCNA6 (94%), and Shaker (97%). In Tityus serrulatus (Brazilian scorpion), this protein is Potassium channel toxin alpha-KTx 4.1.